The primary structure comprises 398 residues: E3 ubiquitin-protein ligase RSL1 (398 aa).

The tract at residues 155 to 374 (QKETCNICLN…LDLTQCCGSC (220 aa)) is TRIAD supradomain. Zn(2+) is bound by residues Cys-159, Cys-162, Cys-183, Cys-186, Cys-246, Cys-251, Cys-271, Cys-274, Cys-279, Cys-282, His-287, Cys-292, Cys-321, and Cys-324. The RING-type 3; degenerate zinc finger occupies 159–207 (CNICLNDDINADQMFSVDKSGHMCCSECVKRHIEVRLLEGSLITCPHYR). An RING-type 1 zinc finger spans residues 159–208 (CNICLNDDINADQMFSVDKSGHMCCSECVKRHIEVRLLEGSLITCPHYRC). The IBR-type zinc finger occupies 233–292 (TKDELIPVMDRVYCPNPRCSTLMSETELSGLNIGVRRCCVKCGEPFCVKCKVSWHNNLSC). The RING-type 2; atypical zinc finger occupies 321 to 349 (CSKCKHMIELSSGCISVVCRCGHTFCYQC). The RING-type 4; degenerate zinc finger occupies 321 to 356 (CSKCKHMIELSSGCISVVCRCGHTFCYQCGADAGDC). Residue Cys-334 is part of the active site. Positions 339, 341, 346, 349, 358, and 370 each coordinate Zn(2+). The helical transmembrane segment at 374-394 (CCCFVFFLVIIAIVVTIILLV) threads the bilayer.

Belongs to the RBR family. In terms of assembly, interacts with the PYL4 and PYR1 ABA receptors at the plasma membrane. Requires Zn(2+) as cofactor.

It localises to the cell membrane. Its subcellular location is the vacuole membrane. It catalyses the reaction [E2 ubiquitin-conjugating enzyme]-S-ubiquitinyl-L-cysteine + [acceptor protein]-L-lysine = [E2 ubiquitin-conjugating enzyme]-L-cysteine + [acceptor protein]-N(6)-ubiquitinyl-L-lysine.. It participates in protein modification; protein ubiquitination. Functionally, acts as an E3 ubiquitin-protein ligase, or as part of E3 complex, which accepts ubiquitin from specific E2 ubiquitin-conjugating enzymes and then transfers it to substrates. Negative regulator of the abscisic acid (ABA) signaling pathway which targets PYL4 and PYR1 ABA receptors in plasma membrane to promote their FREE1/FYVE1-dependent trafficking and degradation upon ubiquitynation; this process involves clathrin-mediated endocytosis and trafficking through the ESCRT pathway. Involved in the maintenance of seed longevity. May enhance gibberellins responses. In Arabidopsis thaliana (Mouse-ear cress), this protein is E3 ubiquitin-protein ligase RSL1.